We begin with the raw amino-acid sequence, 430 residues long: tRNA(Ile)-lysidine synthase (430 aa).

ATP is bound at residue 27–32 (SGGSDS).

This sequence belongs to the tRNA(Ile)-lysidine synthase family.

It localises to the cytoplasm. The enzyme catalyses cytidine(34) in tRNA(Ile2) + L-lysine + ATP = lysidine(34) in tRNA(Ile2) + AMP + diphosphate + H(+). Its function is as follows. Ligates lysine onto the cytidine present at position 34 of the AUA codon-specific tRNA(Ile) that contains the anticodon CAU, in an ATP-dependent manner. Cytidine is converted to lysidine, thus changing the amino acid specificity of the tRNA from methionine to isoleucine. The protein is tRNA(Ile)-lysidine synthase of Rickettsia typhi (strain ATCC VR-144 / Wilmington).